Here is a 338-residue protein sequence, read N- to C-terminus: Phenylalanine--tRNA ligase alpha subunit (338 aa).

Glu-252 is a binding site for Mg(2+).

This sequence belongs to the class-II aminoacyl-tRNA synthetase family. Phe-tRNA synthetase alpha subunit type 1 subfamily. As to quaternary structure, tetramer of two alpha and two beta subunits. It depends on Mg(2+) as a cofactor.

Its subcellular location is the cytoplasm. The enzyme catalyses tRNA(Phe) + L-phenylalanine + ATP = L-phenylalanyl-tRNA(Phe) + AMP + diphosphate + H(+). The protein is Phenylalanine--tRNA ligase alpha subunit of Pseudomonas syringae pv. tomato (strain ATCC BAA-871 / DC3000).